A 617-amino-acid chain; its full sequence is Probable translation initiation factor IF-2 (617 aa).

In terms of domain architecture, tr-type G spans 14–231 (LRQPIVVVLG…VLAGLTQTYL (218 aa)). The interval 23 to 30 (GHVDHGKT) is G1. Residue 23–30 (GHVDHGKT) coordinates GTP. The segment at 48-52 (GITQH) is G2. Residues 87–90 (DTPG) form a G3 region. Residues 87 to 91 (DTPGH) and 141 to 144 (NKID) contribute to the GTP site. The G4 stretch occupies residues 141–144 (NKID). The segment at 209–211 (SAR) is G5.

The protein belongs to the TRAFAC class translation factor GTPase superfamily. Classic translation factor GTPase family. IF-2 subfamily.

Functionally, function in general translation initiation by promoting the binding of the formylmethionine-tRNA to ribosomes. Seems to function along with eIF-2. The protein is Probable translation initiation factor IF-2 (infB) of Aeropyrum pernix (strain ATCC 700893 / DSM 11879 / JCM 9820 / NBRC 100138 / K1).